Here is a 352-residue protein sequence, read N- to C-terminus: Peptide chain release factor 1 (352 aa).

N5-methylglutamine is present on glutamine 233. The disordered stretch occupies residues asparagine 288–asparagine 309. Residues alanine 289–arginine 306 are compositionally biased toward basic and acidic residues.

The protein belongs to the prokaryotic/mitochondrial release factor family. Post-translationally, methylated by PrmC. Methylation increases the termination efficiency of RF1.

The protein localises to the cytoplasm. In terms of biological role, peptide chain release factor 1 directs the termination of translation in response to the peptide chain termination codons UAG and UAA. The sequence is that of Peptide chain release factor 1 from Helicobacter pylori (strain Shi470).